The chain runs to 325 residues: Probable cell division protein WhiA (325 aa).

Residues 273–306 (SLEELGALADPPLTKDAVAGRIRRLLALADKRAN) constitute a DNA-binding region (H-T-H motif).

It belongs to the WhiA family.

Its function is as follows. Involved in cell division and chromosome segregation. The protein is Probable cell division protein WhiA of Frankia casuarinae (strain DSM 45818 / CECT 9043 / HFP020203 / CcI3).